A 92-amino-acid polypeptide reads, in one-letter code: Protein S100-B (92 aa).

The residue at position 2 (Ser-2) is an N-acetylserine. 2 EF-hand domains span residues 13 to 48 (DVFH…LEEI) and 49 to 84 (KEQE…VTTA). His-16 contacts Zn(2+). Positions 19 and 22 each coordinate Ca(2+). Position 26 (His-26) interacts with Zn(2+). Positions 27, 32, 62, 64, 66, 68, and 73 each coordinate Ca(2+). The Zn(2+) site is built by His-86 and His-91.

It belongs to the S-100 family. Dimer of either two alpha chains, or two beta chains, or one alpha and one beta chain. The S100B dimer binds two molecules of STK38. Interacts with CACYBP in a calcium-dependent manner. Interacts with ATAD3A; this interaction probably occurs in the cytosol prior to ATAD3A mitochondrial targeting. Interacts with S100A6. The S100B dimer interacts with two molecules of CAPZA1. Interacts with AGER. Interacts with PPP5C (via TPR repeats); the interaction is calcium-dependent and modulates PPP5C activity. Interacts with TPPP; this interaction inhibits TPPP dimerization. Interacts with isoform CLSTN3beta of CLSTN3; interaction promotes secretion. In terms of tissue distribution, although predominant among the water-soluble brain proteins, S100 is also found in a variety of other tissues.

It is found in the cytoplasm. The protein resides in the nucleus. Its subcellular location is the secreted. In terms of biological role, small zinc- and- and calcium-binding protein that is highly expressed in astrocytes and constitutes one of the most abundant soluble proteins in brain. Weakly binds calcium but binds zinc very tightly-distinct binding sites with different affinities exist for both ions on each monomer. Physiological concentrations of potassium ion antagonize the binding of both divalent cations, especially affecting high-affinity calcium-binding sites. Acts as a neurotrophic factor that promotes astrocytosis and axonal proliferation. Involved in innervation of thermogenic adipose tissue by acting as an adipocyte-derived neurotrophic factor that promotes sympathetic innervation of adipose tissue. Binds to and initiates the activation of STK38 by releasing autoinhibitory intramolecular interactions within the kinase. Interaction with AGER after myocardial infarction may play a role in myocyte apoptosis by activating ERK1/2 and p53/TP53 signaling. Could assist ATAD3A cytoplasmic processing, preventing aggregation and favoring mitochondrial localization. May mediate calcium-dependent regulation on many physiological processes by interacting with other proteins, such as TPR-containing proteins, and modulating their activity. The polypeptide is Protein S100-B (Rattus norvegicus (Rat)).